A 154-amino-acid chain; its full sequence is SsrA-binding protein (154 aa).

Belongs to the SmpB family.

It localises to the cytoplasm. Required for rescue of stalled ribosomes mediated by trans-translation. Binds to transfer-messenger RNA (tmRNA), required for stable association of tmRNA with ribosomes. tmRNA and SmpB together mimic tRNA shape, replacing the anticodon stem-loop with SmpB. tmRNA is encoded by the ssrA gene; the 2 termini fold to resemble tRNA(Ala) and it encodes a 'tag peptide', a short internal open reading frame. During trans-translation Ala-aminoacylated tmRNA acts like a tRNA, entering the A-site of stalled ribosomes, displacing the stalled mRNA. The ribosome then switches to translate the ORF on the tmRNA; the nascent peptide is terminated with the 'tag peptide' encoded by the tmRNA and targeted for degradation. The ribosome is freed to recommence translation, which seems to be the essential function of trans-translation. The chain is SsrA-binding protein from Enterococcus faecalis (strain ATCC 700802 / V583).